The sequence spans 316 residues: Transaldolase (316 aa).

Lys131 functions as the Schiff-base intermediate with substrate in the catalytic mechanism.

This sequence belongs to the transaldolase family. Type 1 subfamily. Homodimer.

It is found in the cytoplasm. The catalysed reaction is D-sedoheptulose 7-phosphate + D-glyceraldehyde 3-phosphate = D-erythrose 4-phosphate + beta-D-fructose 6-phosphate. It functions in the pathway carbohydrate degradation; pentose phosphate pathway; D-glyceraldehyde 3-phosphate and beta-D-fructose 6-phosphate from D-ribose 5-phosphate and D-xylulose 5-phosphate (non-oxidative stage): step 2/3. In terms of biological role, transaldolase is important for the balance of metabolites in the pentose-phosphate pathway. This is Transaldolase from Glaesserella parasuis serovar 5 (strain SH0165) (Haemophilus parasuis).